The primary structure comprises 366 residues: Quinolinate synthase (366 aa).

Residues His44 and Ser61 each contribute to the iminosuccinate site. A [4Fe-4S] cluster-binding site is contributed by Cys108. Residues 139–141 (YIN) and Ser160 each bind iminosuccinate. [4Fe-4S] cluster is bound at residue Cys228. Iminosuccinate-binding positions include 254-256 (HPE) and Thr271. Cys318 is a binding site for [4Fe-4S] cluster.

Belongs to the quinolinate synthase family. Type 3 subfamily. It depends on [4Fe-4S] cluster as a cofactor.

The protein resides in the cytoplasm. It carries out the reaction iminosuccinate + dihydroxyacetone phosphate = quinolinate + phosphate + 2 H2O + H(+). Its pathway is cofactor biosynthesis; NAD(+) biosynthesis; quinolinate from iminoaspartate: step 1/1. Its function is as follows. Catalyzes the condensation of iminoaspartate with dihydroxyacetone phosphate to form quinolinate. This chain is Quinolinate synthase, found in Listeria monocytogenes serovar 1/2a (strain ATCC BAA-679 / EGD-e).